The sequence spans 205 residues: Probable thymidylate kinase (205 aa).

10–17 (GIDGSGKS) contacts ATP.

The protein belongs to the thymidylate kinase family.

The catalysed reaction is dTMP + ATP = dTDP + ADP. The polypeptide is Probable thymidylate kinase (Methanosarcina barkeri (strain Fusaro / DSM 804)).